Here is a 347-residue protein sequence, read N- to C-terminus: Histidinol-phosphate aminotransferase (347 aa).

An N6-(pyridoxal phosphate)lysine modification is found at Lys209.

This sequence belongs to the class-II pyridoxal-phosphate-dependent aminotransferase family. Histidinol-phosphate aminotransferase subfamily. Homodimer. The cofactor is pyridoxal 5'-phosphate.

It carries out the reaction L-histidinol phosphate + 2-oxoglutarate = 3-(imidazol-4-yl)-2-oxopropyl phosphate + L-glutamate. The protein operates within amino-acid biosynthesis; L-histidine biosynthesis; L-histidine from 5-phospho-alpha-D-ribose 1-diphosphate: step 7/9. In Geotalea daltonii (strain DSM 22248 / JCM 15807 / FRC-32) (Geobacter daltonii), this protein is Histidinol-phosphate aminotransferase.